The sequence spans 55 residues: ATP synthase F(0) complex subunit 8 (55 aa).

A helical membrane pass occupies residues 7–24 (NPWFYIMLMSWLTFSLII). Residues 35–55 (NPPSNKTSTTTRTLPWTWPWT) are disordered. Low complexity predominate over residues 41-55 (TSTTTRTLPWTWPWT).

Belongs to the ATPase protein 8 family. As to quaternary structure, component of the ATP synthase complex composed at least of ATP5F1A/subunit alpha, ATP5F1B/subunit beta, ATP5MC1/subunit c (homooctomer), MT-ATP6/subunit a, MT-ATP8/subunit 8, ATP5ME/subunit e, ATP5MF/subunit f, ATP5MG/subunit g, ATP5MK/subunit k, ATP5MJ/subunit j, ATP5F1C/subunit gamma, ATP5F1D/subunit delta, ATP5F1E/subunit epsilon, ATP5PF/subunit F6, ATP5PB/subunit b, ATP5PD/subunit d, ATP5PO/subunit OSCP. ATP synthase complex consists of a soluble F(1) head domain (subunits alpha(3) and beta(3)) - the catalytic core - and a membrane F(0) domain - the membrane proton channel (subunits c, a, 8, e, f, g, k and j). These two domains are linked by a central stalk (subunits gamma, delta, and epsilon) rotating inside the F1 region and a stationary peripheral stalk (subunits F6, b, d, and OSCP).

It localises to the mitochondrion membrane. Functionally, subunit 8, of the mitochondrial membrane ATP synthase complex (F(1)F(0) ATP synthase or Complex V) that produces ATP from ADP in the presence of a proton gradient across the membrane which is generated by electron transport complexes of the respiratory chain. ATP synthase complex consist of a soluble F(1) head domain - the catalytic core - and a membrane F(1) domain - the membrane proton channel. These two domains are linked by a central stalk rotating inside the F(1) region and a stationary peripheral stalk. During catalysis, ATP synthesis in the catalytic domain of F(1) is coupled via a rotary mechanism of the central stalk subunits to proton translocation. In vivo, can only synthesize ATP although its ATP hydrolase activity can be activated artificially in vitro. Part of the complex F(0) domain. In Corythaixoides concolor (Grey go-away-bird), this protein is ATP synthase F(0) complex subunit 8.